Consider the following 144-residue polypeptide: MKTYVAKPAEVDRKWYVIDASDKTLGRLSSEVASILRGKHKPIFTPHVDTGDFVIVINAAKIKLTGDKLNQKKFRHHTGYPGGLREMDYRTLLQKRPEKAIEAAVQGMLPHNRLGRSMIKKLKVYSGSEHPHQAQKPELRELKG.

This sequence belongs to the universal ribosomal protein uL13 family. In terms of assembly, part of the 50S ribosomal subunit.

Functionally, this protein is one of the early assembly proteins of the 50S ribosomal subunit, although it is not seen to bind rRNA by itself. It is important during the early stages of 50S assembly. This is Large ribosomal subunit protein uL13 from Syntrophomonas wolfei subsp. wolfei (strain DSM 2245B / Goettingen).